Here is a 485-residue protein sequence, read N- to C-terminus: NADH-quinone oxidoreductase subunit N (485 aa).

14 helical membrane-spanning segments follow: residues Leu8–Ile28, Phe35–Val55, Gly71–Ala91, Phe105–Leu125, Ser127–Phe147, Tyr159–Ala179, Leu203–Phe223, Pro235–Met255, Val271–Gln291, Leu297–Gln317, Val326–Leu346, Ala373–Ile393, Trp408–Val430, and Ile455–Ile475.

The protein belongs to the complex I subunit 2 family. As to quaternary structure, NDH-1 is composed of 13 different subunits. Subunits NuoA, H, J, K, L, M, N constitute the membrane sector of the complex.

It is found in the cell inner membrane. The enzyme catalyses a quinone + NADH + 5 H(+)(in) = a quinol + NAD(+) + 4 H(+)(out). Its function is as follows. NDH-1 shuttles electrons from NADH, via FMN and iron-sulfur (Fe-S) centers, to quinones in the respiratory chain. The immediate electron acceptor for the enzyme in this species is believed to be ubiquinone. Couples the redox reaction to proton translocation (for every two electrons transferred, four hydrogen ions are translocated across the cytoplasmic membrane), and thus conserves the redox energy in a proton gradient. This chain is NADH-quinone oxidoreductase subunit N, found in Shigella boydii serotype 18 (strain CDC 3083-94 / BS512).